The chain runs to 1093 residues: Protein transport protein Sec24A (1093 aa).

Disordered regions lie at residues M1–P29, H60–T168, G189–P226, and S294–P328. Polar residues-rich tracts occupy residues A112 to F126 and W138 to T168. Pro residues-rich tracts occupy residues S191–P201 and P209–V221. Over residues Y299 to P328 the composition is skewed to polar residues. C431, C434, C452, and C455 together coordinate Zn(2+). Residues C431–C455 are zinc finger-like. The Gelsolin-like repeat unit spans residues P966 to F1038.

This sequence belongs to the SEC23/SEC24 family. SEC24 subfamily. As to quaternary structure, COPII is composed of at least five proteins: the Sec23/24 complex, the Sec13/31 complex and Sar1. Interacts with TMED2. Interacts (as part of the Sec23/24 complex) with SEC22B; recruits SEC22B into COPII-coated vesicles for its transport from the endoplasmic reticulum to the Golgi. Interacts with STING1; promoting STING1 translocation to COPII vesicles in a STEEP1-dependent manner. Interacts with TMEM39A. Interacts with SACM1L; this interaction is reduced in the absence of TMEM39A. Interacts with kinase FAM20C; transport of FAM20C from the endoplasmic reticulum to the Golgi is likely to be mediated by COPII vesicles.

The protein resides in the cytoplasmic vesicle. It localises to the COPII-coated vesicle membrane. The protein localises to the endoplasmic reticulum membrane. Its subcellular location is the cytoplasm. It is found in the cytosol. Its function is as follows. Component of the coat protein complex II (COPII) which promotes the formation of transport vesicles from the endoplasmic reticulum (ER). The coat has two main functions, the physical deformation of the endoplasmic reticulum membrane into vesicles and the selection of cargo molecules for their transport to the Golgi complex. Plays a central role in cargo selection within the COPII complex and together with SEC24B may have a different specificity compared to SEC24C and SEC24D. May package preferentially cargos with cytoplasmic DxE or LxxLE motifs and may also recognize conformational epitopes. The sequence is that of Protein transport protein Sec24A from Homo sapiens (Human).